The following is a 435-amino-acid chain: Histidine--tRNA ligase (435 aa).

This sequence belongs to the class-II aminoacyl-tRNA synthetase family. In terms of assembly, homodimer.

The protein localises to the cytoplasm. It carries out the reaction tRNA(His) + L-histidine + ATP = L-histidyl-tRNA(His) + AMP + diphosphate + H(+). The protein is Histidine--tRNA ligase of Synechococcus sp. (strain ATCC 27144 / PCC 6301 / SAUG 1402/1) (Anacystis nidulans).